A 347-amino-acid polypeptide reads, in one-letter code: CD5 antigen-like (347 aa).

Residues 1–19 (MALLFSLILAICTRPGFLA) form the signal peptide. SRCR domains lie at 24–125 (VRLV…ASCE), 138–239 (VRLA…VECE), and 244–346 (LRLV…VICS). 11 disulfides stabilise this stretch: Cys33–Cys67, Cys49–Cys114, Cys62–Cys124, Cys96–Cys106, Cys163–Cys228, Cys176–Cys238, Cys208–Cys218, Cys253–Cys287, Cys269–Cys335, Cys282–Cys345, and Cys315–Cys325.

As to quaternary structure, interacts with FASN; the interaction is direct. Interacts (via SRCR2 and SRCR3) with pentameric IgM (via Fc region); disulfide-linked. In terms of processing, not N-glycosylated. Probably not O-glycosylated. Expressed in spleen, lymph node, thymus, bone marrow, and fetal liver, but not in non-lymphoid tissues.

The protein resides in the secreted. It is found in the cytoplasm. Secreted protein that acts as a key regulator of lipid synthesis: mainly expressed by macrophages in lymphoid and inflamed tissues and regulates mechanisms in inflammatory responses, such as infection or atherosclerosis. Able to inhibit lipid droplet size in adipocytes. Following incorporation into mature adipocytes via CD36-mediated endocytosis, associates with cytosolic FASN, inhibiting fatty acid synthase activity and leading to lipolysis, the degradation of triacylglycerols into glycerol and free fatty acids (FFA). CD5L-induced lipolysis occurs with progression of obesity: participates in obesity-associated inflammation following recruitment of inflammatory macrophages into adipose tissues, a cause of insulin resistance and obesity-related metabolic disease. Regulation of intracellular lipids mediated by CD5L has a direct effect on transcription regulation mediated by nuclear receptors ROR-gamma (RORC). Acts as a key regulator of metabolic switch in T-helper Th17 cells. Regulates the expression of pro-inflammatory genes in Th17 cells by altering the lipid content and limiting synthesis of cholesterol ligand of RORC, the master transcription factor of Th17-cell differentiation. CD5L is mainly present in non-pathogenic Th17 cells, where it decreases the content of polyunsaturated fatty acyls (PUFA), affecting two metabolic proteins MSMO1 and CYP51A1, which synthesize ligands of RORC, limiting RORC activity and expression of pro-inflammatory genes. Participates in obesity-associated autoimmunity via its association with IgM, interfering with the binding of IgM to Fcalpha/mu receptor and enhancing the development of long-lived plasma cells that produce high-affinity IgG autoantibodies. Also acts as an inhibitor of apoptosis in macrophages: promotes macrophage survival from the apoptotic effects of oxidized lipids in case of atherosclerosis. Involved in early response to microbial infection against various pathogens by acting as a pattern recognition receptor and by promoting autophagy. The chain is CD5 antigen-like (CD5L) from Homo sapiens (Human).